We begin with the raw amino-acid sequence, 702 residues long: Cell adhesion molecule CEACAM5 (702 aa).

Residues 1 to 34 (MESPSAPPHRWCIPWQRLLLTASLLTFWNPPTTA) form the signal peptide. Positions 35-144 (KLTIESTPFN…TGQFRVYPEL (110 aa)) constitute an Ig-like V-type domain. Residues Asn104, Asn115, Asn152, Asn182, Asn197, Asn204, Asn208, Asn246, Asn256, Asn274, Asn288, Asn292, Asn309, Asn330, Asn351, Asn360, Asn375, Asn432, Asn466, Asn480, Asn508, Asn529, Asn553, Asn560, Asn580, Asn612, Asn650, and Asn665 are each glycosylated (N-linked (GlcNAc...) asparagine). Ig-like C2-type domains follow at residues 145-232 (PKPS…VILN), 240-315 (PTIS…TVTT), 323-410 (PKPF…VILN), 418-495 (PTIS…KTIT), 501-588 (PKPS…VTLD), and 593-675 (PDTP…ITVS). Cys167 and Cys215 are oxidised to a cystine. A disulfide bond links Cys259 and Cys299. A disulfide bridge connects residues Cys345 and Cys393. A disulfide bridge connects residues Cys437 and Cys477. Cys523 and Cys571 form a disulfide bridge. A disulfide bridge links Cys615 with Cys655. Ala685 is lipidated: GPI-anchor amidated alanine. A propeptide spans 686–702 (GATVGIMIGVLVGVALI) (removed in mature form).

This sequence belongs to the immunoglobulin superfamily. CEA family. Homodimer. Post-translationally, complex immunoreactive glycoprotein with a MW of 180 kDa comprising 60% carbohydrate. In terms of tissue distribution, expressed in columnar epithelial and goblet cells of the colon (at protein level). Found in adenocarcinomas of endodermally derived digestive system epithelium and fetal colon.

The protein resides in the cell membrane. Its subcellular location is the apical cell membrane. It localises to the cell surface. Its function is as follows. Cell surface glycoprotein that plays a role in cell adhesion, intracellular signaling and tumor progression. Mediates homophilic and heterophilic cell adhesion with other carcinoembryonic antigen-related cell adhesion molecules, such as CEACAM6. Plays a role as an oncogene by promoting tumor progression; induces resistance to anoikis of colorectal carcinoma cells. Functionally, (Microbial infection) Receptor for E.coli Dr adhesins. Binding of E.coli Dr adhesins leads to dissociation of the homodimer. The polypeptide is Cell adhesion molecule CEACAM5 (Homo sapiens (Human)).